A 126-amino-acid chain; its full sequence is MEHCIENANLLYVKTQISKVKINEKYNAVKILFKDTDKYNIISAEADCCSESWFYFFEDKKLASIVGKSIKNIEYCKDIDLPPSNVQECDINSLYRMNFTDGTYFEFVLRNSSNGYYCGWLEVHRY.

This is an uncharacterized protein from Acanthamoeba polyphaga mimivirus (APMV).